We begin with the raw amino-acid sequence, 139 residues long: Nucleoside diphosphate kinase (139 aa).

Residues Lys-10, Phe-58, Arg-86, Thr-92, Arg-103, and Asn-113 each contribute to the ATP site. His-116 serves as the catalytic Pros-phosphohistidine intermediate.

This sequence belongs to the NDK family. Homotetramer. The cofactor is Mg(2+).

The protein localises to the cytoplasm. It catalyses the reaction a 2'-deoxyribonucleoside 5'-diphosphate + ATP = a 2'-deoxyribonucleoside 5'-triphosphate + ADP. It carries out the reaction a ribonucleoside 5'-diphosphate + ATP = a ribonucleoside 5'-triphosphate + ADP. Functionally, major role in the synthesis of nucleoside triphosphates other than ATP. The ATP gamma phosphate is transferred to the NDP beta phosphate via a ping-pong mechanism, using a phosphorylated active-site intermediate. This Caulobacter vibrioides (strain ATCC 19089 / CIP 103742 / CB 15) (Caulobacter crescentus) protein is Nucleoside diphosphate kinase.